The chain runs to 332 residues: 5-dehydro-2-deoxygluconokinase (332 aa).

Belongs to the carbohydrate kinase PfkB family.

It carries out the reaction 5-dehydro-2-deoxy-D-gluconate + ATP = 6-phospho-5-dehydro-2-deoxy-D-gluconate + ADP + H(+). The protein operates within polyol metabolism; myo-inositol degradation into acetyl-CoA; acetyl-CoA from myo-inositol: step 5/7. Functionally, catalyzes the phosphorylation of 5-dehydro-2-deoxy-D-gluconate (2-deoxy-5-keto-D-gluconate or DKG) to 6-phospho-5-dehydro-2-deoxy-D-gluconate (DKGP). The chain is 5-dehydro-2-deoxygluconokinase from Bacillus thuringiensis (strain Al Hakam).